Here is a 200-residue protein sequence, read N- to C-terminus: Probable nicotinate-nucleotide adenylyltransferase (200 aa).

This sequence belongs to the NadD family.

The enzyme catalyses nicotinate beta-D-ribonucleotide + ATP + H(+) = deamido-NAD(+) + diphosphate. The protein operates within cofactor biosynthesis; NAD(+) biosynthesis; deamido-NAD(+) from nicotinate D-ribonucleotide: step 1/1. Its function is as follows. Catalyzes the reversible adenylation of nicotinate mononucleotide (NaMN) to nicotinic acid adenine dinucleotide (NaAD). This chain is Probable nicotinate-nucleotide adenylyltransferase, found in Clostridium acetobutylicum (strain ATCC 824 / DSM 792 / JCM 1419 / IAM 19013 / LMG 5710 / NBRC 13948 / NRRL B-527 / VKM B-1787 / 2291 / W).